We begin with the raw amino-acid sequence, 91 residues long: Bacterial microcompartment shell protein PduJ (91 aa).

Residues 4 to 88 (ALGLVETKGL…PHSDVEAILP (85 aa)) enclose the BMC domain.

Belongs to the bacterial microcompartments protein family. In terms of assembly, homohexamer with a central pore of about 5.7 Angstroms in diameter. Interacts with PduP, which targets PduP to the BMC.

The protein resides in the bacterial microcompartment. The protein operates within polyol metabolism; 1,2-propanediol degradation. One of the major shell proteins of the bacterial microcompartment (BMC) dedicated to 1,2-propanediol (1,2-PD) degradation. The isolated BMC shell component protein ratio for J:A:B':B:K:T:U is approximately 15:10:7:6:1:1:2. At least one of PduA or PduJ is required for BMC assembly; it must be encoded as the first gene in the pdu operon. Required for structural integrity of BMCs and to mitigate propionaldehyde toxicity, probably joins facets responsible for BMC closure. Edge residues (particularly Lys-25) are important for function and assembly of the BMC. 80% identical to PduA; although their pore regions appear structurally identical, unlike PduA plays no role in 1,2-PD diffusion into or out of the BMC shell. If pduJ is cloned in the chromosomal position of pduA it is able to complement a pduA deletion; it then has a functional pore as it assumes the transport functions of PduA. Overexpression of this protein leads to aberrant filaments that extend the length of the cell, cross the cleavage furrow and impair division. The filaments form nanotubes with a hollow center. Modeling suggests PduJ is probably the hub for binding multiple enzymes to the interior of the BMC; modeling suggests PduC, PduD, PduG and PduM are targeted to PduJ. Functionally, the 1,2-propanediol (1,2-PD) degradation bacterial microcompartment (BMC) concentrates low levels of 1,2-PD catabolic enzymes, concentrates volatile reaction intermediates thus enhancing pathway flux and keeps the level of toxic, mutagenic propionaldehyde low. In Salmonella typhimurium (strain LT2 / SGSC1412 / ATCC 700720), this protein is Bacterial microcompartment shell protein PduJ.